The primary structure comprises 252 residues: E3 ubiquitin-protein ligase MARCHF3 (252 aa).

The RING-CH-type zinc-finger motif lies at 62-122 (SSFNDHPMCR…ELCHFRFSVE (61 aa)). Cysteine 70, cysteine 73, cysteine 86, cysteine 88, histidine 96, cysteine 99, cysteine 112, and cysteine 115 together coordinate Zn(2+). Helical transmembrane passes span 144 to 164 (LFGDMVCFLFITPLATISGWL) and 181 to 201 (AVGLIALTVALFTIYLFWTLV).

The protein resides in the cytoplasmic vesicle membrane. The protein localises to the early endosome membrane. It catalyses the reaction S-ubiquitinyl-[E2 ubiquitin-conjugating enzyme]-L-cysteine + [acceptor protein]-L-lysine = [E2 ubiquitin-conjugating enzyme]-L-cysteine + N(6)-ubiquitinyl-[acceptor protein]-L-lysine.. It participates in protein modification; protein ubiquitination. Its function is as follows. E3 ubiquitin-protein ligase which may be involved in endosomal trafficking. E3 ubiquitin ligases accept ubiquitin from an E2 ubiquitin-conjugating enzyme in the form of a thioester and then directly transfer the ubiquitin to targeted substrates. In Xenopus laevis (African clawed frog), this protein is E3 ubiquitin-protein ligase MARCHF3 (marchf3).